The primary structure comprises 525 residues: Protein kinase PINOID 2 (525 aa).

The interval 1–27 (MANSSIFYKDNESDYESSTVGPDSSRR) is disordered. The 379-residue stretch at 87 to 465 (FRLLKRLGSG…SIEIKRHEFF (379 aa)) folds into the Protein kinase domain. ATP is bound by residues 93–101 (LGSGDIGSV) and lysine 118. Residue aspartate 214 is the Proton acceptor of the active site. The AGC-kinase C-terminal domain maps to 466-525 (EGVNWALIRSIKPPWVPKEETSHKTKGDNRSVNYYLPPRFMMSRKERNEPYHVSNYFDYF).

Belongs to the protein kinase superfamily. Ser/Thr protein kinase family.

It carries out the reaction L-seryl-[protein] + ATP = O-phospho-L-seryl-[protein] + ADP + H(+). It catalyses the reaction L-threonyl-[protein] + ATP = O-phospho-L-threonyl-[protein] + ADP + H(+). In terms of biological role, serine/threonine-protein kinase involved in the regulation of auxin signaling. Plays a minor role in the regulation of cellular auxin efflux and cotyledon organogenesis. The chain is Protein kinase PINOID 2 (PID2) from Arabidopsis thaliana (Mouse-ear cress).